A 144-amino-acid polypeptide reads, in one-letter code: Large ribosomal subunit protein uL11 (144 aa).

The protein belongs to the universal ribosomal protein uL11 family. In terms of assembly, part of the ribosomal stalk of the 50S ribosomal subunit. Interacts with L10 and the large rRNA to form the base of the stalk. L10 forms an elongated spine to which L12 dimers bind in a sequential fashion forming a multimeric L10(L12)X complex. One or more lysine residues are methylated.

Its function is as follows. Forms part of the ribosomal stalk which helps the ribosome interact with GTP-bound translation factors. The protein is Large ribosomal subunit protein uL11 of Neisseria gonorrhoeae (strain ATCC 700825 / FA 1090).